Here is a 1011-residue protein sequence, read N- to C-terminus: Collagen alpha-2(I) chain (1011 aa).

A disordered region spans residues 1-1011 (SGGFDFSFLP…FGYEGDFYRA (1011 aa)). 4-hydroxyproline occurs at positions 10, 13, 35, and 41. The segment covering 28–67 (LMGPRGPPGASGAPGPQGFQGPAGEPGEPGQTGPAGARGP) has biased composition (low complexity). Lysine 106 carries the post-translational modification 5-hydroxylysine; alternate. Lysine 106 is a glycosylation site (O-linked (Gal...) hydroxylysine; alternate). Over residues 167 to 182 (SVGPVGPAGPIGSAGP) the composition is skewed to low complexity. The span at 282–291 (GESGGKGEPG) shows a compositional bias: gly residues. The segment covering 292–302 (SAGPQGPPGSS) has biased composition (low complexity). The segment covering 323–332 (GLRGGPGSRG) has biased composition (gly residues). Over residues 345-361 (PAGARGASGPAGVRGPS) the composition is skewed to low complexity. 2 positions are modified to 4-hydroxyproline: proline 367 and proline 370. Positions 396 to 415 (LPGIDGRPGPIGPAGARGEA) are enriched in low complexity. The span at 464–473 (GVQGGKGEQG) shows a compositional bias: gly residues. Composition is skewed to low complexity over residues 520–537 (PGES…SRGP) and 549–559 (EPGVVGAPGTA). Over residues 560-578 (GPAGSGGPGERGAAGIPGG) the composition is skewed to gly residues. Composition is skewed to low complexity over residues 588–635 (RGEV…PRGS) and 642–662 (VGPA…QPGA). Residues 663–672 (KGERGTKGPK) show a composition bias toward basic and acidic residues. Over residues 680 to 690 (PTGPVGSAGPA) the composition is skewed to low complexity. Positions 700–709 (GSRGDGGPPG) are enriched in gly residues. Positions 711 to 720 (TGFPGAAGRT) are enriched in low complexity. The segment covering 757-766 (GETGAGGPPG) has biased composition (gly residues). Composition is skewed to low complexity over residues 774 to 801 (SGEP…LGLP) and 809 to 819 (LPGVAGAVGEP). The span at 820–834 (GPLGIGPPGARGDGL) shows a compositional bias: gly residues. Composition is skewed to low complexity over residues 843–856 (YAGN…AGAP) and 872–887 (EPGP…ALGP). The span at 897 to 908 (RGDKGEPGEKGP) shows a compositional bias: basic and acidic residues. Positions 981-993 (SGPPGPPGPPGPP) are enriched in pro residues.

The protein belongs to the fibrillar collagen family. In terms of assembly, trimers of one alpha 2(I) and two alpha 1(I) chains. Interacts (via C-terminus) with TMEM131 (via PapD-L domain); the interaction is direct and is involved in assembly and TRAPPIII ER-to-Golgi transport complex-dependent secretion of collagen. Post-translationally, prolines at the third position of the tripeptide repeating unit (G-X-Y) are hydroxylated in some or all of the chains. In terms of tissue distribution, expressed in bones.

The protein resides in the secreted. The protein localises to the extracellular space. Its subcellular location is the extracellular matrix. Functionally, type I collagen is a member of group I collagen (fibrillar forming collagen). This Neocnus comes (Miller's Hispaniolan ground sloth) protein is Collagen alpha-2(I) chain.